A 215-amino-acid chain; its full sequence is Jasmonate monooxygenase ABM (215 aa).

The region spanning F2–V90 is the ABM domain.

Its subcellular location is the endoplasmic reticulum. It is found in the secreted. The catalysed reaction is jasmonate + NADPH + O2 + H(+) = (1R,2R)-12-hydroxyjasmonate + NADP(+) + H2O. Its function is as follows. Monooxygenase that converts the endogenous (and likely the host) jasmonate (JA) to its hydroxylated derivative 12-hydroxyjasmonate (12OH-JA), also known as tuberonic acid, a compound that attenuates or disables jasmonate-based host innate immunity and which is essential for proper initiation and elaboration of the blast disease in rice. ABM, together with a polyketide synthase MGG_04775 and the esterase MGG_04774, share the secondary metabolism gene cluster with ABC transporter ABC3, and therefore may also be involved in the synthesis of other important metabolites such as the ABC3 transporter efflux substrate (ATS) and/or additional polyketides. In Pyricularia oryzae (strain 70-15 / ATCC MYA-4617 / FGSC 8958) (Rice blast fungus), this protein is Jasmonate monooxygenase ABM.